Reading from the N-terminus, the 147-residue chain is Basic phospholipase A2 beta-bungarotoxin A2 chain (147 aa).

The N-terminal stretch at 1-19 is a signal peptide; that stretch reads MYPAHLLVLSAVCVSLLGA. Positions 20–27 are excised as a propeptide; that stretch reads ANIPPYPL. 6 disulfides stabilise this stretch: Cys-54–Cys-146, Cys-56–Cys-72, Cys-71–Cys-127, Cys-78–Cys-120, Cys-88–Cys-113, and Cys-106–Cys-118. Ca(2+) contacts are provided by Tyr-55, Gly-57, and Gly-59. His-75 is an active-site residue. Asp-76 is a Ca(2+) binding site. Asp-121 is an active-site residue.

Belongs to the phospholipase A2 family. Group I subfamily. D49 sub-subfamily. In terms of assembly, heterodimer; disulfide-linked. The A chains have phospholipase A2 activity and the B chains show homology with the basic protease inhibitors. The cofactor is Ca(2+). As to expression, expressed by the venom gland.

It localises to the secreted. The enzyme catalyses a 1,2-diacyl-sn-glycero-3-phosphocholine + H2O = a 1-acyl-sn-glycero-3-phosphocholine + a fatty acid + H(+). Snake venom phospholipase A2 (PLA2) that inhibits neuromuscular transmission by blocking acetylcholine release from the nerve termini. PLA2 catalyzes the calcium-dependent hydrolysis of the 2-acyl groups in 3-sn-phosphoglycerides. In Bungarus caeruleus (Indian krait), this protein is Basic phospholipase A2 beta-bungarotoxin A2 chain.